A 427-amino-acid chain; its full sequence is Zinc finger protein DPF3 (427 aa).

Residues 182-244 (LENDENADEV…NDAASQDDHD (63 aa)) form a disordered region. Acidic residues predominate over residues 184 to 199 (NDENADEVNEEEDLEE). Over residues 233–244 (RRNDAASQDDHD) the composition is skewed to basic and acidic residues. Residues 247-270 (YVCDICGKRYKNRPGLSYHYAHTH) form a C2H2-type zinc finger. The interval 272-301 (ASEEGDEAREQETRSSPVHRNENHKPQKGP) is disordered. Residues 279-296 (AREQETRSSPVHRNENHK) are compositionally biased toward basic and acidic residues. PHD-type zinc fingers lie at residues 308–368 (NNYC…CKSC) and 365–415 (CKSC…CREL).

The protein belongs to the requiem/DPF family. In terms of assembly, component of the BAF complex. Interacts with acetylated histones H3 and H4. Component of neuron-specific chromatin remodeling complex (nBAF complex), a subfamily of ATP-dependent SWI/SNF chromatin remodeling complexes. Expressed in the heart and somites.

The protein localises to the nucleus. Functionally, muscle-specific component of the BAF complex, a multiprotein complex involved in transcriptional activation and repression of select genes by chromatin remodeling (alteration of DNA-nucleosome topology). Specifically binds acetylated lysines on histone 3 and 4. In the complex, it acts as a tissue-specific anchor between histone acetylations and methylations and chromatin remodeling. It thereby probably plays an essential role in heart and skeletal muscle development. Belongs to the neuron-specific chromatin remodeling complex (nBAF complex) and plays a role in neural development. This chain is Zinc finger protein DPF3 (DPF3), found in Gallus gallus (Chicken).